A 472-amino-acid polypeptide reads, in one-letter code: P2X purinoceptor 2 (472 aa).

Over 1–34 the chain is Cytoplasmic; it reads MVRRLARGCWSAFWDYETPKVIVVRNRRLGFVHR. Disulfide bonds link C9/C430, C113/C164, C124/C147, C130/C158, C214/C224, and C258/C267. Residues 35-52 form a helical membrane-spanning segment; sequence MVQLLILLYFVWYVFIVQ. Residues 53–326 are Extracellular-facing; sequence KSYQDSETGP…IVHGQAGKFS (274 aa). ATP is bound by residues K69 and K71. N182 is a glycosylation site (N-linked (GlcNAc...) asparagine). T184 lines the ATP pocket. N-linked (GlcNAc...) asparagine glycosylation is present at N239. Residues S284, N288, and R290 each contribute to the ATP site. N298 is a glycosylation site (N-linked (GlcNAc...) asparagine). K308 lines the ATP pocket. Residues 309–322 form a pore-forming motif region; that stretch reads AYGIRIDVIVHGQA. A helical transmembrane segment spans residues 327 to 347; it reads LIPTIINLATALTSIGVGSFL. The Cytoplasmic portion of the chain corresponds to 348 to 472; the sequence is CDWILLTFMN…STDPKGLAQL (125 aa). Residues 393–472 are disordered; that stretch reads PPPSHYSQDQ…STDPKGLAQL (80 aa). The segment covering 456–465 has biased composition (polar residues); the sequence is PSQQDSTSTD.

It belongs to the P2X receptor family. Homotrimer and heterotrimer; functional P2XRs are organized as homomeric and heteromeric trimers. Homotrimer. Forms heterotrimer with P2RX1. Forms heterotrimer with P2RX6. Forms heterotrimer with P2RX3. As to expression, high levels in pituitary and vas deferens. Lower extent in spinal cord, bladder, brain, adrenal, testis, sensory epithelia from the inner ear.

The protein localises to the cell membrane. The enzyme catalyses Ca(2+)(in) = Ca(2+)(out). It carries out the reaction K(+)(in) = K(+)(out). It catalyses the reaction Na(+)(in) = Na(+)(out). Its activity is regulated as follows. Fast activation by external ATP. Exhibits slow desensitization during prolonged ATP activation. Not sensitive to the ATP agonist:alpha/beta-methylene-ATP. ATP-gated nonselective transmembrane cation channel permeable to potassium, sodium and calcium. Activation by extracellular ATP induces a variety of cellular responses, such as excitatory postsynaptic responses in sensory neurons, neuromuscular junctions (NMJ) formation, hearing, perception of taste and peristalsis. In the inner ear, regulates sound transduction and auditory neurotransmission, outer hair cell electromotility, inner ear gap junctions, and K(+) recycling. Mediates synaptic transmission between neurons and from neurons to smooth muscle. The protein is P2X purinoceptor 2 (P2rx2) of Rattus norvegicus (Rat).